A 446-amino-acid chain; its full sequence is Methylenetetrahydrofolate--tRNA-(uracil-5-)-methyltransferase TrmFO (446 aa).

Residue 9-14 (GGGMAG) participates in FAD binding.

This sequence belongs to the MnmG family. TrmFO subfamily. It depends on FAD as a cofactor.

The protein localises to the cytoplasm. It carries out the reaction uridine(54) in tRNA + (6R)-5,10-methylene-5,6,7,8-tetrahydrofolate + NADH + H(+) = 5-methyluridine(54) in tRNA + (6S)-5,6,7,8-tetrahydrofolate + NAD(+). The catalysed reaction is uridine(54) in tRNA + (6R)-5,10-methylene-5,6,7,8-tetrahydrofolate + NADPH + H(+) = 5-methyluridine(54) in tRNA + (6S)-5,6,7,8-tetrahydrofolate + NADP(+). In terms of biological role, catalyzes the folate-dependent formation of 5-methyl-uridine at position 54 (M-5-U54) in all tRNAs. The polypeptide is Methylenetetrahydrofolate--tRNA-(uracil-5-)-methyltransferase TrmFO (Ruegeria sp. (strain TM1040) (Silicibacter sp.)).